The sequence spans 180 residues: tRNA-splicing endonuclease (180 aa).

Active-site residues include tyrosine 117, histidine 125, and lysine 156.

The protein belongs to the tRNA-intron endonuclease family. Archaeal short subfamily. In terms of assembly, homotetramer; although the tetramer contains four active sites, only two participate in the cleavage. Therefore, it should be considered as a dimer of dimers.

The enzyme catalyses pretRNA = a 3'-half-tRNA molecule with a 5'-OH end + a 5'-half-tRNA molecule with a 2',3'-cyclic phosphate end + an intron with a 2',3'-cyclic phosphate and a 5'-hydroxyl terminus.. Its function is as follows. Endonuclease that removes tRNA introns. Cleaves pre-tRNA at the 5'- and 3'-splice sites to release the intron. The products are an intron and two tRNA half-molecules bearing 2',3' cyclic phosphate and 5'-OH termini. Recognizes a pseudosymmetric substrate in which 2 bulged loops of 3 bases are separated by a stem of 4 bp. In Sulfurisphaera tokodaii (strain DSM 16993 / JCM 10545 / NBRC 100140 / 7) (Sulfolobus tokodaii), this protein is tRNA-splicing endonuclease.